Consider the following 579-residue polypeptide: V-type ATP synthase alpha chain (579 aa).

ATP is bound at residue 238–245 (GPFGAGKT).

The protein belongs to the ATPase alpha/beta chains family.

The enzyme catalyses ATP + H2O + 4 H(+)(in) = ADP + phosphate + 5 H(+)(out). Functionally, produces ATP from ADP in the presence of a proton gradient across the membrane. The V-type alpha chain is a catalytic subunit. This Borrelia hermsii (strain HS1 / DAH) protein is V-type ATP synthase alpha chain.